We begin with the raw amino-acid sequence, 457 residues long: UDP-N-acetylmuramoylalanine--D-glutamate ligase (457 aa).

117–123 (GTNGKST) contacts ATP.

This sequence belongs to the MurCDEF family.

The protein localises to the cytoplasm. It catalyses the reaction UDP-N-acetyl-alpha-D-muramoyl-L-alanine + D-glutamate + ATP = UDP-N-acetyl-alpha-D-muramoyl-L-alanyl-D-glutamate + ADP + phosphate + H(+). Its pathway is cell wall biogenesis; peptidoglycan biosynthesis. Cell wall formation. Catalyzes the addition of glutamate to the nucleotide precursor UDP-N-acetylmuramoyl-L-alanine (UMA). The chain is UDP-N-acetylmuramoylalanine--D-glutamate ligase from Paramagnetospirillum magneticum (strain ATCC 700264 / AMB-1) (Magnetospirillum magneticum).